Here is a 356-residue protein sequence, read N- to C-terminus: Protein RecA (356 aa).

ATP is bound at residue 67–74 (GPESSGKT).

This sequence belongs to the RecA family.

The protein resides in the cytoplasm. In terms of biological role, can catalyze the hydrolysis of ATP in the presence of single-stranded DNA, the ATP-dependent uptake of single-stranded DNA by duplex DNA, and the ATP-dependent hybridization of homologous single-stranded DNAs. It interacts with LexA causing its activation and leading to its autocatalytic cleavage. This is Protein RecA from Yersinia pseudotuberculosis serotype I (strain IP32953).